The chain runs to 155 residues: 17.6 kDa class I heat shock protein 1 (155 aa).

The sHSP domain occupies 39–154; it reads SSSAIANARV…KAQVKSIDIS (116 aa).

It belongs to the small heat shock protein (HSP20) family. In terms of assembly, forms oligomeric structures. Binds to AKR2A.

It localises to the cytoplasm. In terms of biological role, possesses chaperone activity. This is 17.6 kDa class I heat shock protein 1 (HSP17.6A) from Arabidopsis thaliana (Mouse-ear cress).